The primary structure comprises 102 residues: Hypersensitivity to hygromycin-B protein 1 (102 aa).

Residues 1 to 17 (MSLSFLLFSPFLPPCFS) form the signal peptide. Residues 18–38 (SISICLSVLSTVSFFFAFTIP) traverse the membrane as a helical segment. Residues 39 to 69 (HYVLRCGSVDEWHIHSSAEDFRTQRCVCAVK) lie on the Cytoplasmic side of the membrane. The chain crosses the membrane as a helical span at residues 70–90 (LSASLLGCLLACASWSLLLEV). The Extracellular portion of the chain corresponds to 91 to 102 (SRIKWHVGTAYS).

The protein localises to the membrane. In terms of biological role, involved in vacuolar trafficking. This chain is Hypersensitivity to hygromycin-B protein 1, found in Saccharomyces cerevisiae (strain ATCC 204508 / S288c) (Baker's yeast).